The chain runs to 254 residues: Aspartate/glutamate leucyltransferase (254 aa).

Belongs to the R-transferase family. Bpt subfamily.

The protein resides in the cytoplasm. The catalysed reaction is N-terminal L-glutamyl-[protein] + L-leucyl-tRNA(Leu) = N-terminal L-leucyl-L-glutamyl-[protein] + tRNA(Leu) + H(+). It catalyses the reaction N-terminal L-aspartyl-[protein] + L-leucyl-tRNA(Leu) = N-terminal L-leucyl-L-aspartyl-[protein] + tRNA(Leu) + H(+). Functionally, functions in the N-end rule pathway of protein degradation where it conjugates Leu from its aminoacyl-tRNA to the N-termini of proteins containing an N-terminal aspartate or glutamate. The sequence is that of Aspartate/glutamate leucyltransferase from Xylella fastidiosa (strain 9a5c).